The sequence spans 310 residues: Probable deoxyhypusine synthase (310 aa).

Lysine 284 acts as the Nucleophile in catalysis.

This sequence belongs to the deoxyhypusine synthase family. It depends on NAD(+) as a cofactor.

It catalyses the reaction [eIF5A protein]-L-lysine + spermidine = [eIF5A protein]-deoxyhypusine + propane-1,3-diamine. The protein operates within protein modification; eIF5A hypusination. Functionally, catalyzes the NAD-dependent oxidative cleavage of spermidine and the subsequent transfer of the butylamine moiety of spermidine to the epsilon-amino group of a specific lysine residue of the eIF-5A precursor protein to form the intermediate deoxyhypusine residue. In Thermoplasma acidophilum (strain ATCC 25905 / DSM 1728 / JCM 9062 / NBRC 15155 / AMRC-C165), this protein is Probable deoxyhypusine synthase (dys).